We begin with the raw amino-acid sequence, 238 residues long: Small ribosomal subunit protein uS3 (238 aa).

A KH type-2 domain is found at Ile-39–Asn-109. Positions Glu-215–Asn-238 are disordered.

The protein belongs to the universal ribosomal protein uS3 family. Part of the 30S ribosomal subunit. Forms a tight complex with proteins S10 and S14.

Functionally, binds the lower part of the 30S subunit head. Binds mRNA in the 70S ribosome, positioning it for translation. In Thermosynechococcus vestitus (strain NIES-2133 / IAM M-273 / BP-1), this protein is Small ribosomal subunit protein uS3.